We begin with the raw amino-acid sequence, 772 residues long: MRTLEDSSGTVLHRLIQEQLRYGNLTETRTLLAIQQQALRGGAGAGGTGSPQASLEIGAPEDSQVLQQATRQEPQGQEHQGGETHLAENRLYRLCPQPSKGEELPTYEEAKAHSQYYAAQQAGSRPHVGDRDPRGGVSGGGRRQDEALRELRHGHVRSLSERLLQLSLERNGARVPSHMSSSHSFPQLARSQQGPQPRGPPAEGPEPRGPPPQYPHAVMAQETAAVTDPRYRPRSSPHFQHAEVRILQAQVPPVFLQQQQYQYLPQPQEHSPPLHPAALGHGPPSSFGPPAVEGPPSAQATLGSAHLAQMETVLRENARLQRDNERLQRELESTSEKAGRIEKLENEIQRLSEAHESLMRTSSKREALEKTMRNKMDGEMRRLQDFNRDLRERLESANRHLASKTQEAQAGSQDMVAKLLAQSYEQQQEQEKLEREMALLRGAIEDQRRHAELLEQALGNAQSRAARAEEELRKKQAYVEKVERLQQALGQLQAACEKREQLELRLRTRLEQELKALRAQQRQTGTLAGGGGSHGGSAELSALRLSEQLREKEEQILALEADMTKWEQKYLEERAMRQFAMDAAATAAAQRDTTLIRHSPQPSPSSSFNEGLLPGNHRHQEMESRLKVLHAQILEKDAVIKVLQQRSRKDPGKATQGTLRPAKSVPSIFAAAVGTQGWQGLVSSERQTDARPAGDRVPAEEPPATAPLPAHTKHGSRDGSTQTDGPADNTSACLASEPDGLLGCNSSQRTPSLDSIAATRVQDLSDMVEILI.

Disordered stretches follow at residues 41 to 158 (GGAG…HVRS), 170 to 239 (RNGA…SPHF), and 260 to 299 (QYQYLPQPQEHSPPLHPAALGHGPPSSFGPPAVEGPPSAQ). 3 stretches are compositionally biased toward basic and acidic residues: residues 80-91 (QGGETHLAENRL), 100-112 (KGEELPTYEEAKA), and 142-153 (RRQDEALRELRH). The segment at 101-303 (GEELPTYEEA…GPPSAQATLG (203 aa)) is required for interaction with CDH5. Phosphotyrosine; by FGFR1 is present on Y107. Positions 178-191 (HMSSSHSFPQLARS) are enriched in polar residues. The segment covering 197-214 (PRGPPAEGPEPRGPPPQY) has biased composition (pro residues). The interval 221–303 (QETAAVTDPR…GPPSAQATLG (83 aa)) is required for interaction with CDH1. The stretch at 305–578 (AHLAQMETVL…KYLEERAMRQ (274 aa)) forms a coiled coil. Residues K343 and K404 each participate in a glycyl lysine isopeptide (Lys-Gly) (interchain with G-Cter in ubiquitin) cross-link. 2 disordered regions span residues 596–615 (IRHSPQPSPSSSFNEGLLPG) and 680–752 (GLVS…RTPS). Residues 686-699 (RQTDARPAGDRVPA) are compositionally biased toward basic and acidic residues. Positions 718-733 (DGSTQTDGPADNTSAC) are enriched in polar residues. S752 and S755 each carry phosphoserine. Positions 769 to 772 (EILI) match the PDZ-binding motif.

Belongs to the angiomotin family. As to quaternary structure, part of a complex composed of AMOTL2, MAGI1 and CDH5, within the complex AMOTL2 acts as a scaffold protein for the interaction of MAGI1 with CDH5. The complex is required for coupling actin fibers to cell junctions in endothelial cells. Within the complex AMOTL2 (via its N-terminus) interacts with CDH5. Interacts (via N-terminus) with MAGI1. Interacts (via N-terminus) with ACTB; the interaction facilitates binding of cell junction complexes to actin fibers in endothelial cells. Interacts with CDH1; the interaction may facilitate binding of radial actin fibers to cell junction complexes. Interacts with SRC. Interacts with YAP1; the interaction is required for ubiquitination of AMOTL2 and localization of YAP1 to tight junctions. Interacts with WWP1; the interaction facilitates WWP1 interaction with the Crumbs complex and subsequent WWP1 translocation to the plasma membrane. WWP1 interaction with the Crumbs complex promotes WWP1 monoubiquitination of AMOTL2 which subsequently activates the Hippo signaling pathway. When ubiquitinated interacts with LATS2 (via UBA domain); the interaction promotes LATS2 phosphorylation of YAP1. Interacts (via PPXY motif) with WWTR1/TAZ (via WW domain); the interaction promotes WWTR1/TAZ localization to the cytoplasm and thereby inhibition of its transcriptional properties. Interacts with PHLDB2; interaction may facilitate PHLDB2 localization to the myotube podosome cortex that surrounds the core. Post-translationally, phosphorylation at Tyr-107 is necessary for efficient binding to SRC and synergistically functioning with SRC to activate the downstream MAPK pathway. Monoubiquitinated at Lys-343 and Lys-404 by Crumbs complex-bound WWP1. De-ubiquitinated at Lys-343 and Lys-404 by USP9X; the interaction may be promoted by cell contact inhibition. Deubiquitination of AMOTL2 negatively regulates Hippo signaling activation. Expressed in skeletal muscle at neuromuscular junctions (at protein level).

Its subcellular location is the recycling endosome. It is found in the cytoplasm. It localises to the cell projection. The protein localises to the podosome. The protein resides in the cell junction. In terms of biological role, regulates the translocation of phosphorylated SRC to peripheral cell-matrix adhesion sites. Required for proper architecture of actin filaments. Plays a role in coupling actin fibers to cell junctions in endothelial cells and is therefore required for correct endothelial cell morphology via facilitating transcellular transmission of mechanical force resulting in endothelial cell elongation. Required for the anchoring of radial actin fibers to CDH1 junction complexes at the cell membrane which facilitates organization of radial actin fiber structure and cellular response to contractile forces. This contributes to maintenance of cell area, size, shape, epithelial sheet organization and trophectoderm cell properties that facilitate blastocyst zona hatching. Inhibits the Wnt/beta-catenin signaling pathway, probably by recruiting CTNNB1 to recycling endosomes and hence preventing its translocation to the nucleus. Participates in angiogenesis. Activates the Hippo signaling pathway in response to cell contact inhibition via interaction with and ubiquitination by Crumbs complex-bound WWP1. Ubiquitinated AMOTL2 then interacts with LATS2 which in turn phosphorylates YAP1, excluding it from the nucleus and localizing it to the cytoplasm and tight junctions, therefore ultimately repressing YAP1-driven transcription of target genes. Acts to inhibit WWTR1/TAZ transcriptional coactivator activity via sequestering WWTR1/TAZ in the cytoplasm and at tight junctions. Regulates the size and protein composition of the podosome cortex and core at myofibril neuromuscular junctions. Selectively promotes FGF-induced MAPK activation through SRC. May play a role in the polarity, proliferation and migration of endothelial cells. This is Angiomotin-like protein 2 from Mus musculus (Mouse).